We begin with the raw amino-acid sequence, 305 residues long: UDP-3-O-acyl-N-acetylglucosamine deacetylase (305 aa).

His78, His237, and Asp241 together coordinate Zn(2+). Residue His264 is the Proton donor of the active site.

The protein belongs to the LpxC family. Zn(2+) serves as cofactor.

It carries out the reaction a UDP-3-O-[(3R)-3-hydroxyacyl]-N-acetyl-alpha-D-glucosamine + H2O = a UDP-3-O-[(3R)-3-hydroxyacyl]-alpha-D-glucosamine + acetate. It participates in glycolipid biosynthesis; lipid IV(A) biosynthesis; lipid IV(A) from (3R)-3-hydroxytetradecanoyl-[acyl-carrier-protein] and UDP-N-acetyl-alpha-D-glucosamine: step 2/6. In terms of biological role, catalyzes the hydrolysis of UDP-3-O-myristoyl-N-acetylglucosamine to form UDP-3-O-myristoylglucosamine and acetate, the committed step in lipid A biosynthesis. This Cupriavidus taiwanensis (strain DSM 17343 / BCRC 17206 / CCUG 44338 / CIP 107171 / LMG 19424 / R1) (Ralstonia taiwanensis (strain LMG 19424)) protein is UDP-3-O-acyl-N-acetylglucosamine deacetylase.